The following is a 291-amino-acid chain: Taste receptor type 2 member 16 (291 aa).

Methionine 1 is a topological domain (extracellular). A helical transmembrane segment spans residues 2–22 (IPIQLTVFFMIIYVLESLTII). Residues 23–41 (VQSSLIVAVLGREWLQVRR) are Cytoplasmic-facing. A helical transmembrane segment spans residues 42–62 (LMPVDMILISLGISRFCLQWA). The Extracellular portion of the chain corresponds to 63–84 (SMLNNFCSYFNLNYVLCNLTIT). An N-linked (GlcNAc...) asparagine glycan is attached at asparagine 80. A helical transmembrane segment spans residues 85–105 (WEFFNILTFWLNSLLTVFYCI). The Cytoplasmic portion of the chain corresponds to 106–125 (KVSSFTHHIFLWLRWRILRL). A helical transmembrane segment spans residues 126-146 (FPWILLGSLMITCVTIIPSAI). The Extracellular portion of the chain corresponds to 147 to 182 (GNYIQIQLLTMEHLPRNSTVTDKLENFHQYQFQAHT). Asparagine 163 carries N-linked (GlcNAc...) asparagine glycosylation. The chain crosses the membrane as a helical span at residues 183–203 (VALVIPFILFLASTIFLMASL). The Cytoplasmic portion of the chain corresponds to 204–228 (TKQIQHHSTGHCNPSMKARFTALRS). The helical transmembrane segment at 229 to 249 (LAVLFIVFTSYFLTILITIIG) threads the bilayer. Topologically, residues 250–257 (TLFDKRCW) are extracellular. A helical membrane pass occupies residues 258–278 (LWVWEAFVYAFILMHSTSLML). Over 279-291 (SSPTLKRILKGKC) the chain is Cytoplasmic.

Belongs to the G-protein coupled receptor T2R family. In terms of assembly, interacts with RTP3 and RTP4. As to expression, expressed in a subset of gustducin-positive taste receptor cells of the tongue. Expressed in circumvallate papillae and testis.

The protein resides in the cell membrane. Gustducin-coupled receptor implicated in the perception of bitter compounds in the oral cavity and the gastrointestinal tract. Signals through PLCB2 and the calcium-regulated cation channel TRPM5. The protein is Taste receptor type 2 member 16 (TAS2R16) of Homo sapiens (Human).